The chain runs to 370 residues: Keratin-associated protein 10-7 (370 aa).

The segment at 36–363 is 30 X 5 AA repeats of C-C-X(3); sequence DCPESCCEPP…CSRPACCGPT (328 aa). 30 repeat units span residues 41-45, 46-50, 67-71, 89-93, 99-103, 109-113, 114-118, 119-123, 135-139, 145-149, 155-159, 160-164, 172-176, 186-190, 208-212, 218-222, 228-232, 233-237, 238-242, 250-254, 255-259, 265-269, 270-274, 275-279, 287-291, 297-301, 302-306, 321-325, 339-343, and 359-363.

The protein belongs to the KRTAP type 10 family. As to quaternary structure, interacts with hair keratins. In terms of tissue distribution, restricted to a narrow region of the hair fiber cuticle, lying approximately 20 cell layers above the apex of the dermal papilla of the hair root; not detected in any other tissues.

Functionally, in the hair cortex, hair keratin intermediate filaments are embedded in an interfilamentous matrix, consisting of hair keratin-associated proteins (KRTAP), which are essential for the formation of a rigid and resistant hair shaft through their extensive disulfide bond cross-linking with abundant cysteine residues of hair keratins. The matrix proteins include the high-sulfur and high-glycine-tyrosine keratins. This chain is Keratin-associated protein 10-7 (KRTAP10-7), found in Homo sapiens (Human).